The sequence spans 352 residues: Anthranilate phosphoribosyltransferase (352 aa).

5-phospho-alpha-D-ribose 1-diphosphate contacts are provided by residues Gly-91, 94 to 95, Thr-99, 101 to 104, 119 to 127, and Ser-131; these read GD, NIST, and KHGNRASSS. Residue Gly-91 participates in anthranilate binding. A Mg(2+)-binding site is contributed by Ser-103. An anthranilate-binding site is contributed by Asn-122. Arg-177 lines the anthranilate pocket. Mg(2+) is bound by residues Asp-235 and Glu-236.

The protein belongs to the anthranilate phosphoribosyltransferase family. As to quaternary structure, homodimer. Mg(2+) is required as a cofactor.

The enzyme catalyses N-(5-phospho-beta-D-ribosyl)anthranilate + diphosphate = 5-phospho-alpha-D-ribose 1-diphosphate + anthranilate. The protein operates within amino-acid biosynthesis; L-tryptophan biosynthesis; L-tryptophan from chorismate: step 2/5. Functionally, catalyzes the transfer of the phosphoribosyl group of 5-phosphorylribose-1-pyrophosphate (PRPP) to anthranilate to yield N-(5'-phosphoribosyl)-anthranilate (PRA). In Arthrobacter sp. (strain FB24), this protein is Anthranilate phosphoribosyltransferase.